The sequence spans 181 residues: NADH-quinone oxidoreductase subunit B (181 aa).

Positions 60, 61, 125, and 155 each coordinate [4Fe-4S] cluster.

The protein belongs to the complex I 20 kDa subunit family. NDH-1 is composed of 14 different subunits. Subunits NuoB, C, D, E, F, and G constitute the peripheral sector of the complex. The cofactor is [4Fe-4S] cluster.

It localises to the cell inner membrane. The enzyme catalyses a quinone + NADH + 5 H(+)(in) = a quinol + NAD(+) + 4 H(+)(out). NDH-1 shuttles electrons from NADH, via FMN and iron-sulfur (Fe-S) centers, to quinones in the respiratory chain. Couples the redox reaction to proton translocation (for every two electrons transferred, four hydrogen ions are translocated across the cytoplasmic membrane), and thus conserves the redox energy in a proton gradient. The chain is NADH-quinone oxidoreductase subunit B from Novosphingobium aromaticivorans (strain ATCC 700278 / DSM 12444 / CCUG 56034 / CIP 105152 / NBRC 16084 / F199).